The primary structure comprises 118 residues: Ribosomal silencing factor RsfS (118 aa).

It belongs to the Iojap/RsfS family. In terms of assembly, interacts with ribosomal protein uL14 (rplN).

The protein resides in the cytoplasm. Functionally, functions as a ribosomal silencing factor. Interacts with ribosomal protein uL14 (rplN), blocking formation of intersubunit bridge B8. Prevents association of the 30S and 50S ribosomal subunits and the formation of functional ribosomes, thus repressing translation. This is Ribosomal silencing factor RsfS from Bacillus subtilis (strain 168).